A 1205-amino-acid polypeptide reads, in one-letter code: Transcriptional-regulating factor 1 (1205 aa).

Disordered regions lie at residues 201 to 226, 270 to 317, 332 to 351, 390 to 500, 527 to 583, and 601 to 629; these read YQQVPQQPHPGFTGGLPKPALPVGQH, YPQP…QRQS, QHLQEQQQPSMHLQPPSYHR, PQSH…QTKG, LNGH…PEAE, and PKPSSQGFTNSVAATPAARDKPASSMSDD. 2 stretches are compositionally biased toward low complexity: residues 291–317 and 332–342; these read QQQQQPQQIRPSPPQQQQQLQLQQRQS and QHLQEQQQPSM. 3 stretches are compositionally biased toward polar residues: residues 406 to 417, 437 to 447, and 487 to 498; these read KTYSSDRQTPAM, SEMTRVTSTLP, and QSGSPESSSGQT. Phosphoserine is present on Ser490. The segment at 512 to 534 adopts a C2H2-type 1 zinc-finger fold; sequence LTCSICLKEFKSLPALNGHMRSH. Pro residues predominate over residues 551–579; the sequence is APPPQPQPQPQPQQPLPPPPPPPPPPQLP. A compositionally biased stretch (polar residues) spans 604–613; sequence SSQGFTNSVA. N6-acetyllysine is present on residues Lys639 and Lys646. Residue Thr773 is modified to Phosphothreonine. Positions 785-876 constitute an ELM2 domain; it reads PRINIGLRFQ…ATLEMLLLRK (92 aa). The SANT domain maps to 891 to 942; it reads AGSDKWTSLERKLFNKALATYSKDFIFVQKMVKSKTVAQCVEYYYTWKKIMR. Over residues 956–975 the composition is skewed to acidic residues; sequence DDCMTSEEEEEAEEEEEDPE. Disordered stretches follow at residues 956-1016 and 1043-1087; these read DDCM…QQPS and HGGT…GETD. Thr960 is subject to Phosphothreonine. At Ser961 the chain carries Phosphoserine. Residues 976–990 show a composition bias toward basic and acidic residues; sequence EDRKSIKEEESEVAK. The C2H2-type 2 zinc-finger motif lies at 1019–1043; that stretch reads FICEMPNCGAVFSSRQALNGHARIH. Over residues 1072 to 1086 the composition is skewed to low complexity; it reads SVKSSPSHSTTSGET. The segment at 1092-1114 adopts a C2H2-type 3 zinc-finger fold; the sequence is FPCKECGKVFFKIKSRNAHMKTH.

In terms of assembly, interacts with CREBBP and EP300. Interacts with DNTTIP1 and DNTT. Highly expressed in kidney, lung and brain. In the brain, expression was seen in the basal ganglia, hippocampus, piriform cortex, cerebral cortex, ventromedial nucleus of the hypothalamus and the dorsal and superior central nuclei of the raphe.

The protein resides in the nucleus. Binds DNA and activates transcription of CYP11A1. Interaction with CREBBP and EP300 results in a synergistic transcriptional activation of CYP11A1. This is Transcriptional-regulating factor 1 (Trerf1) from Mus musculus (Mouse).